The sequence spans 595 residues: Sialic acid-binding Ig-like lectin 12 (595 aa).

A signal peptide spans 1–18 (MLLLLLLLPPLLCGRVGA). 2 Ig-like V-type domains span residues 19 to 142 (KEQK…VNVT) and 143 to 269 (ASQD…VHVT). At 19 to 481 (KEQKDYLLTM…RPISGVTLGA (463 aa)) the chain is on the extracellular side. C44 and C104 are oxidised to a cystine. 4 N-linked (GlcNAc...) asparagine glycosylation sites follow: N140, N179, N230, and N290. Disulfide bonds link C166/C299, C171/C231, and C293/C342. Residues 275–358 (PTFSIPGTLE…AGVTMTRAVR (84 aa)) enclose the Ig-like C2-type 1 domain. N-linked (GlcNAc...) asparagine glycosylation is found at N360, N367, and N385. An Ig-like C2-type 2 domain is found at 365 to 462 (PQNLTMTVFQ…GSQHISLSLS (98 aa)). C401 and C446 are oxidised to a cystine. A helical transmembrane segment spans residues 482–502 (FGGAGATALVFLYFCIIFVVV). Residues 503 to 595 (RSCRKKSARP…YEYSEINIPK (93 aa)) lie on the Cytoplasmic side of the membrane. Positions 512–560 (PAVGVGDTGMEDANAVRGSASQGPLIESPADDSPPHHAPPALATPSPEE) are disordered. Positions 563–568 (IQYASL) match the ITIM motif motif. A phosphotyrosine mark is found at Y565 and Y588. The SLAM-like motif signature appears at 586-591 (YEYSEI).

Belongs to the immunoglobulin superfamily. SIGLEC (sialic acid binding Ig-like lectin) family. As to expression, isoform Short is highly expressed in spleen, small intestine and adrenal gland; it is lower expressed in thyroid, placenta, brain, stomach, bone marrow, spinal cord and breast. Isoform Long is highly expressed in spleen, small intestine and bone marrow; it is lower expressed in thyroid, placenta, thymus, trachea, stomach, lung, adrenal gland, fetal brain and testis.

It is found in the membrane. In terms of biological role, putative adhesion molecule that mediates sialic-acid dependent binding to cells. The sialic acid recognition site may be masked by cis interactions with sialic acids on the same cell surface. The chain is Sialic acid-binding Ig-like lectin 12 (SIGLEC12) from Homo sapiens (Human).